We begin with the raw amino-acid sequence, 719 residues long: Aminodeoxychorismate synthase (719 aa).

The 195-residue stretch at 5–199 (RTLLIDNYDS…RDLSLRAAGH (195 aa)) folds into the Glutamine amidotransferase type-1 domain. Cysteine 86 (nucleophile) is an active-site residue. Catalysis depends on residues histidine 173 and glutamate 175. Residues 199–224 (HRPPHTERIPAPAPAPAPAPAPAPPA) are disordered. A compositionally biased stretch (pro residues) spans 209 to 224 (APAPAPAPAPAPAPPA).

It in the C-terminal section; belongs to the anthranilate synthase component I family.

It carries out the reaction chorismate + L-glutamine = 4-amino-4-deoxychorismate + L-glutamate. The protein operates within antibiotic biosynthesis. Its function is as follows. Involved in pristinamycin I biosynthesis. Catalyzes the biosynthesis of 4-amino-4-deoxychorismate (ADC) from chorismate and glutamine. This chain is Aminodeoxychorismate synthase, found in Streptomyces pristinaespiralis.